A 192-amino-acid polypeptide reads, in one-letter code: NF-kappa-B inhibitor-interacting Ras-like protein 1 (192 aa).

The tract at residues 1 to 192 (MGKGCKVVVC…KSKGTPSNDI (192 aa)) is small GTPase-like. 11–18 (GMASVGKT) provides a ligand contact to GTP. Residues 35–43 (TSDTQEDIY) carry the Effector region motif. Residues 61–65 (DTRGL) and 120–123 (NKCE) each bind GTP. Residues 169 to 192 (TQPQSKSAFPLPGRKSKGTPSNDI) form a disordered region.

This sequence belongs to the small GTPase superfamily. Ras family. KappaB-Ras subfamily.

It localises to the cytoplasm. In terms of biological role, atypical Ras-like protein that acts as a potent regulator of NF-kappa-B activity by preventing the degradation of NF-kappa-B inhibitor beta (NFKBIB) by most signals, explaining why NFKBIB is more resistant to degradation. In Danio rerio (Zebrafish), this protein is NF-kappa-B inhibitor-interacting Ras-like protein 1 (nkiras1).